Here is a 559-residue protein sequence, read N- to C-terminus: Transcription factor tstO (559 aa).

The segment at residues 23-50 (CDACQSAKVRCGREKPTCRRCQNQGKTC) is a DNA-binding region (zn(2)-C6 fungal-type). 2 disordered regions span residues 166-316 (GPST…TGFS) and 453-477 (ASPP…ISTA). Positions 222 to 232 (SSESLSLEPSS) are enriched in low complexity. Residues 255 to 267 (TRGSQKISPNPHS) show a composition bias toward polar residues. Residues 268 to 279 (IDSRTSSRDKSF) show a composition bias toward basic and acidic residues. Composition is skewed to low complexity over residues 286-316 (STLG…TGFS) and 462-477 (NNNT…ISTA).

The protein localises to the nucleus. Transcription factore; part of the gene cluster that mediates the biosynthesis of the antihypercholesterolemic agents phomoidrides which are dimeric anhydrides. Probably regulates the expression of the genes from the cluster. The polypeptide is Transcription factor tstO (Talaromyces stipitatus (strain ATCC 10500 / CBS 375.48 / QM 6759 / NRRL 1006) (Penicillium stipitatum)).